We begin with the raw amino-acid sequence, 513 residues long: ATP synthase subunit alpha (513 aa).

Residue 169–176 (GDRQTGKT) participates in ATP binding.

This sequence belongs to the ATPase alpha/beta chains family. As to quaternary structure, F-type ATPases have 2 components, CF(1) - the catalytic core - and CF(0) - the membrane proton channel. CF(1) has five subunits: alpha(3), beta(3), gamma(1), delta(1), epsilon(1). CF(0) has three main subunits: a(1), b(2) and c(9-12). The alpha and beta chains form an alternating ring which encloses part of the gamma chain. CF(1) is attached to CF(0) by a central stalk formed by the gamma and epsilon chains, while a peripheral stalk is formed by the delta and b chains.

It localises to the cell inner membrane. It catalyses the reaction ATP + H2O + 4 H(+)(in) = ADP + phosphate + 5 H(+)(out). Its function is as follows. Produces ATP from ADP in the presence of a proton gradient across the membrane. The alpha chain is a regulatory subunit. This is ATP synthase subunit alpha from Salmonella agona (strain SL483).